Consider the following 103-residue polypeptide: Large ribosomal subunit protein bL21 (103 aa).

Belongs to the bacterial ribosomal protein bL21 family. Part of the 50S ribosomal subunit. Contacts protein L20.

Functionally, this protein binds to 23S rRNA in the presence of protein L20. This chain is Large ribosomal subunit protein bL21, found in Mycolicibacterium paratuberculosis (strain ATCC BAA-968 / K-10) (Mycobacterium paratuberculosis).